Here is a 242-residue protein sequence, read N- to C-terminus: Probable 2-phosphosulfolactate phosphatase (242 aa).

This sequence belongs to the ComB family. Mg(2+) serves as cofactor.

The enzyme catalyses (2R)-O-phospho-3-sulfolactate + H2O = (2R)-3-sulfolactate + phosphate. This is Probable 2-phosphosulfolactate phosphatase from Prochlorococcus marinus (strain NATL1A).